Reading from the N-terminus, the 492-residue chain is GMP reductase (492 aa).

Residues 30 to 31 (SR) and arginine 78 each bind NADP(+). 2 CBS domains span residues 99–162 (LIED…LVET) and 164–223 (MTPV…RNAT). NADP(+) is bound by residues 260–262 (DIA) and 313–314 (VG). The K(+) site is built by glycine 314, glycine 316, and cysteine 319. Residue cysteine 319 is the Thioimidate intermediate of the active site. Catalysis depends on threonine 321, which acts as the Proton donor/acceptor. Arginine 322 is a binding site for K(+). Residues 352-354 (DGG), 375-376 (GN), and 401-403 (GMA) each bind GMP. NADP(+) is bound by residues methionine 402 and 454–457 (SGIS). The Microbody targeting signal motif lies at 490 to 492 (SKL).

This sequence belongs to the IMPDH/GMPR family. GuaC type 1 subfamily. In terms of assembly, homotetramer.

The protein resides in the glycosome. The catalysed reaction is IMP + NH4(+) + NADP(+) = GMP + NADPH + 2 H(+). With respect to regulation, activated by GTP and inhibited by XMP and the IMP analogs allopurinol nucleotide and thiopurinol nucleotide. In terms of biological role, catalyzes the irreversible NADPH-dependent deamination of GMP to IMP. It functions in the conversion of nucleobase, nucleoside and nucleotide derivatives of G to A nucleotides, and in maintaining the intracellular balance of A and G nucleotides. The polypeptide is GMP reductase (Leishmania donovani).